The sequence spans 38 residues: Photosystem II reaction center protein L (38 aa).

A helical membrane pass occupies residues 17-37; that stretch reads SLYWGLLLIFVLAVLFSSYFF.

This sequence belongs to the PsbL family. As to quaternary structure, PSII is composed of 1 copy each of membrane proteins PsbA, PsbB, PsbC, PsbD, PsbE, PsbF, PsbH, PsbI, PsbJ, PsbK, PsbL, PsbM, PsbT, PsbX, PsbY, PsbZ, Psb30/Ycf12, at least 3 peripheral proteins of the oxygen-evolving complex and a large number of cofactors. It forms dimeric complexes.

The protein resides in the plastid. It localises to the chloroplast thylakoid membrane. In terms of biological role, one of the components of the core complex of photosystem II (PSII). PSII is a light-driven water:plastoquinone oxidoreductase that uses light energy to abstract electrons from H(2)O, generating O(2) and a proton gradient subsequently used for ATP formation. It consists of a core antenna complex that captures photons, and an electron transfer chain that converts photonic excitation into a charge separation. This subunit is found at the monomer-monomer interface and is required for correct PSII assembly and/or dimerization. The protein is Photosystem II reaction center protein L of Thalassiosira pseudonana (Marine diatom).